A 243-amino-acid chain; its full sequence is Ubiquinone/menaquinone biosynthesis C-methyltransferase UbiE (243 aa).

S-adenosyl-L-methionine-binding positions include threonine 69, aspartate 90, and 116-117 (DA).

Belongs to the class I-like SAM-binding methyltransferase superfamily. MenG/UbiE family.

It carries out the reaction a 2-demethylmenaquinol + S-adenosyl-L-methionine = a menaquinol + S-adenosyl-L-homocysteine + H(+). It catalyses the reaction a 2-methoxy-6-(all-trans-polyprenyl)benzene-1,4-diol + S-adenosyl-L-methionine = a 5-methoxy-2-methyl-3-(all-trans-polyprenyl)benzene-1,4-diol + S-adenosyl-L-homocysteine + H(+). Its pathway is quinol/quinone metabolism; menaquinone biosynthesis; menaquinol from 1,4-dihydroxy-2-naphthoate: step 2/2. It participates in cofactor biosynthesis; ubiquinone biosynthesis. Methyltransferase required for the conversion of demethylmenaquinol (DMKH2) to menaquinol (MKH2) and the conversion of 2-polyprenyl-6-methoxy-1,4-benzoquinol (DDMQH2) to 2-polyprenyl-3-methyl-6-methoxy-1,4-benzoquinol (DMQH2). This Cupriavidus pinatubonensis (strain JMP 134 / LMG 1197) (Cupriavidus necator (strain JMP 134)) protein is Ubiquinone/menaquinone biosynthesis C-methyltransferase UbiE.